A 482-amino-acid polypeptide reads, in one-letter code: Bile acid receptor (482 aa).

Lys-132 participates in a covalent cross-link: Glycyl lysine isopeptide (Lys-Gly) (interchain with G-Cter in SUMO1). The segment at residues 134-209 is a DNA-binding region (nuclear receptor); sequence DELCVVCGDR…MGMLAECLLT (76 aa). An NR C4-type zinc finger spans residues 137–157; that stretch reads CVVCGDRASGYHYNALTCEGC. Phosphoserine; by PKC/PRKCA occurs at positions 145 and 164. An N6-acetyllysine; by EP300 modification is found at Lys-167. Residues 173–197 form an NR C4-type zinc finger; it reads CKNGGNCVMDMYMRRKCQECRLRKC. Position 216 is an N6-methyllysine; by SETD7 (Lys-216). The residue at position 223 (Lys-223) is an N6-acetyllysine; by EP300. Residues 229 to 240 show a composition bias toward basic and acidic residues; it reads AIHEDSEGRDLR. Positions 229 to 253 are disordered; that stretch reads AIHEDSEGRDLRQVTSTTKSCREKT. The NR LBD domain maps to 258–482; it reads DQQNLLHYIM…PLLCEIWDVQ (225 aa). Residue Lys-285 forms a Glycyl lysine isopeptide (Lys-Gly) (interchain with G-Cter in SUMO1) linkage. Positions 341, 371, and 379 each coordinate chenodeoxycholate. Thr-452 bears the Phosphothreonine; by PKC/PRKCZ mark. Position 457 (His-457) interacts with chenodeoxycholate.

This sequence belongs to the nuclear hormone receptor family. NR1 subfamily. Heterodimer with RXRA; the heterodimerization enhances the binding affinity for LXXLL motifs from coactivators. Binds DNA predominantly as a heterodimer with RXRA. After activation by agonist binding interacts with coactivators. Interacts with NCOA1, NCOA2, PPARGC1A, CARM1, SETD7, PRMT1, GPS2, SMARCA4 and MED1, EP300 and SMARCD1. Interacts with XRCC5 and XRCC6; decreasing NR1H4/FXR transactivation activity towards ABCB11/BSEP. Interacts with PAGR1 AND NCOA6; indicative for an association with an MLL2/MLL3 complex (ASCOM). Acetylated by EP300. Lys-223 as is the major acetylation site for EP300; the dynamicly regulated acetylation inhibits heterodimerization with RXRA and transactivation activity. Deacetylated by SIRT1. Post-translationally, methylation may increase transactivation of target genes. In terms of processing, phosphorylation by PKC/PRKCA increases transactivation activity by promoting association with PPARGC1A. Sumoylated upon ligand binding.

It localises to the nucleus. Its function is as follows. Ligand-activated transcription factor. Receptor for bile acids (BAs) such as chenodeoxycholic acid (CDCA), lithocholic acid, deoxycholic acid (DCA) and allocholic acid (ACA). Plays a essential role in BA homeostasis through the regulation of genes involved in BA synthesis, conjugation and enterohepatic circulation. Also regulates lipid and glucose homeostasis and is involved innate immune response. The FXR-RXR heterodimer binds predominantly to farnesoid X receptor response elements (FXREs) containing two inverted repeats of the consensus sequence 5'-AGGTCA-3' in which the monomers are spaced by 1 nucleotide (IR-1) but also to tandem repeat DR1 sites with lower affinity, and can be activated by either FXR or RXR-specific ligands. It is proposed that monomeric nuclear receptors such as NR5A2/LRH-1 bound to coregulatory nuclear responsive element (NRE) halfsites located in close proximity to FXREs modulate transcriptional activity. In the liver activates transcription of the corepressor NR0B2 thereby indirectly inhibiting CYP7A1 and CYP8B1 (involved in BA synthesis) implicating at least in part histone demethylase KDM1A resulting in epigenomic repression, and SLC10A1/NTCP (involved in hepatic uptake of conjugated BAs). Activates transcription of the repressor MAFG (involved in regulation of BA synthesis). Activates transcription of SLC27A5/BACS and BAAT (involved in BA conjugation), ABCB11/BSEP (involved in bile salt export) by directly recruiting histone methyltransferase CARM1, and ABCC2/MRP2 (involved in secretion of conjugated BAs) and ABCB4 (involved in secretion of phosphatidylcholine in the small intestine). Activates transcription of SLC27A5/BACS and BAAT (involved in BA conjugation), ABCB11/BSEP (involved in bile salt export) by directly recruiting histone methyltransferase CARM1, and ABCC2/MRP2 (involved in secretion of conjugated BAs) and ABCB4 (involved in secretion of phosphatidylcholine in the small intestine). In the intestine activates FGF19 expression and secretion leading to hepatic CYP7A1 repression. The function also involves the coordinated induction of hepatic KLB/beta-klotho expression. Regulates transcription of liver UGT2B4 and SULT2A1 involved in BA detoxification; binding to the UGT2B4 promoter seems to imply a monomeric transactivation independent of RXRA. Modulates lipid homeostasis by activating liver NR0B2/SHP-mediated repression of SREBF1 (involved in de novo lipogenesis), expression of PLTP (involved in HDL formation), SCARB1 (involved in HDL hepatic uptake), APOE, APOC1, APOC4, PPARA (involved in beta-oxidation of fatty acids), VLDLR and SDC1 (involved in the hepatic uptake of LDL and IDL remnants), and inhibiting expression of MTTP (involved in VLDL assembly). Increases expression of APOC2 (promoting lipoprotein lipase activity implicated in triglyceride clearance). Transrepresses APOA1 involving a monomeric competition with NR2A1 for binding to a DR1 element. Also reduces triglyceride clearance by inhibiting expression of ANGPTL3 and APOC3 (both involved in inhibition of lipoprotein lipase). Involved in glucose homeostasis by modulating hepatic gluconeogenesis through activation of NR0B2/SHP-mediated repression of respective genes. Modulates glycogen synthesis (inducing phosphorylation of glycogen synthase kinase-3). Modulates glucose-stimulated insulin secretion and is involved in insulin resistance. Involved in intestinal innate immunity. Plays a role in protecting the distal small intestine against bacterial overgrowth and preservation of the epithelial barrier. Down-regulates inflammatory cytokine expression in several types of immune cells including macrophages and mononuclear cells. Mediates trans-repression of TLR4-induced cytokine expression; the function seems to require its sumoylation and prevents N-CoR nuclear receptor corepressor clearance from target genes such as IL1B and NOS2. Involved in the TLR9-mediated protective mechanism in intestinal inflammation. Plays an anti-inflammatory role in liver inflammation; proposed to inhibit pro-inflammatory (but not antiapoptotic) NF-kappa-B signaling. This chain is Bile acid receptor (NR1H4), found in Bos taurus (Bovine).